The sequence spans 312 residues: MQTNSSLSEATGSACDPLTRAQILIEALPYIQQYQGRVIVIKYGGAAMVHQERRAEVLRDIVFLACVGIRPVLVHGGGPEINSWLQKLDIPFKFVDGLRVTDAATMEVVEMVLVGKVNKQIVQLISLAGGSAVGLCGRDGNLIKARSQGRAEIGFVGEVSSINPQLLQTLLEGGQIPVISSVAADETGQAYNINADTVAGELAASLGAEKLILLTDTPGILKDPQDRSSLITLLDIETARQLIQAGVVKGGMIPKVQCCIRALAQGVRAAHILDGGSPHSLLLELLTDAGVGTKLVPSQFSAQLEGLNNGSR.

Substrate contacts are provided by residues 77–78, arginine 99, and asparagine 192; that span reads GG.

The protein belongs to the acetylglutamate kinase family. ArgB subfamily.

Its subcellular location is the cytoplasm. The catalysed reaction is N-acetyl-L-glutamate + ATP = N-acetyl-L-glutamyl 5-phosphate + ADP. It functions in the pathway amino-acid biosynthesis; L-arginine biosynthesis; N(2)-acetyl-L-ornithine from L-glutamate: step 2/4. Catalyzes the ATP-dependent phosphorylation of N-acetyl-L-glutamate. This chain is Acetylglutamate kinase, found in Synechococcus sp. (strain JA-2-3B'a(2-13)) (Cyanobacteria bacterium Yellowstone B-Prime).